A 157-amino-acid chain; its full sequence is Transcription elongation factor GreA (157 aa).

It belongs to the GreA/GreB family.

Functionally, necessary for efficient RNA polymerase transcription elongation past template-encoded arresting sites. The arresting sites in DNA have the property of trapping a certain fraction of elongating RNA polymerases that pass through, resulting in locked ternary complexes. Cleavage of the nascent transcript by cleavage factors such as GreA or GreB allows the resumption of elongation from the new 3'terminus. GreA releases sequences of 2 to 3 nucleotides. This Bartonella tribocorum (strain CIP 105476 / IBS 506) protein is Transcription elongation factor GreA.